Reading from the N-terminus, the 96-residue chain is Seed trypsin/chymotrypsin inhibitor IVA (96 aa).

A signal peptide spans 1-10 (LSFAANVVNA). Positions 11–24 (RFDSTSFITQVLSN) are excised as a propeptide. 7 cysteine pairs are disulfide-bonded: Cys-32/Cys-85, Cys-33/Cys-48, Cys-36/Cys-81, Cys-38/Cys-46, Cys-55/Cys-62, Cys-59/Cys-74, and Cys-64/Cys-72. A propeptide spans 88-96 (SEVEEVIKN) (removed in PSTI I).

This sequence belongs to the Bowman-Birk serine protease inhibitor family. In terms of tissue distribution, seed.

Its function is as follows. Inhibitor of trypsin and of chymotrypsin. May function as a natural phytochemical defense against predators. This chain is Seed trypsin/chymotrypsin inhibitor IVA (TI1236), found in Pisum sativum (Garden pea).